A 538-amino-acid chain; its full sequence is Inositol-3-phosphate synthase (538 aa).

Gly-74, Gly-75, Asn-76, Asn-77, Asp-150, Ser-186, Val-187, Gln-197, Asp-198, Arg-200, Thr-247, Ala-248, Asn-249, Thr-250, Gly-298, Ser-299, Asp-323, Ser-326, Asn-357, Asn-358, Asp-359, Lys-372, Gly-412, Asp-413, Asp-441, and Ser-442 together coordinate NAD(+).

Belongs to the myo-inositol 1-phosphate synthase family. In terms of assembly, homotetramer. NAD(+) serves as cofactor.

It is found in the cytoplasm. The enzyme catalyses D-glucose 6-phosphate = 1D-myo-inositol 3-phosphate. It functions in the pathway polyol metabolism; myo-inositol biosynthesis; myo-inositol from D-glucose 6-phosphate: step 1/2. Key enzyme in myo-inositol biosynthesis pathway that catalyzes the conversion of glucose 6-phosphate to 1-myo-inositol 1-phosphate in a NAD-dependent manner. Rate-limiting enzyme in the synthesis of all inositol-containing compounds. In Candida glabrata (strain ATCC 2001 / BCRC 20586 / JCM 3761 / NBRC 0622 / NRRL Y-65 / CBS 138) (Yeast), this protein is Inositol-3-phosphate synthase (INO1).